Reading from the N-terminus, the 214-residue chain is Large ribosomal subunit protein uL18 (214 aa).

This sequence belongs to the universal ribosomal protein uL18 family. As to quaternary structure, part of the 50S ribosomal subunit. Contacts the 5S and 23S rRNAs.

This is one of the proteins that bind and probably mediate the attachment of the 5S RNA into the large ribosomal subunit, where it forms part of the central protuberance. This Aeropyrum pernix (strain ATCC 700893 / DSM 11879 / JCM 9820 / NBRC 100138 / K1) protein is Large ribosomal subunit protein uL18.